Consider the following 284-residue polypeptide: 4-diphosphocytidyl-2-C-methyl-D-erythritol kinase (284 aa).

Residue lysine 14 is part of the active site. 98 to 108 (PMGGGLGGGSS) provides a ligand contact to ATP. Aspartate 140 is a catalytic residue.

Belongs to the GHMP kinase family. IspE subfamily.

The catalysed reaction is 4-CDP-2-C-methyl-D-erythritol + ATP = 4-CDP-2-C-methyl-D-erythritol 2-phosphate + ADP + H(+). Its pathway is isoprenoid biosynthesis; isopentenyl diphosphate biosynthesis via DXP pathway; isopentenyl diphosphate from 1-deoxy-D-xylulose 5-phosphate: step 3/6. Catalyzes the phosphorylation of the position 2 hydroxy group of 4-diphosphocytidyl-2C-methyl-D-erythritol. This chain is 4-diphosphocytidyl-2-C-methyl-D-erythritol kinase, found in Shewanella sp. (strain MR-7).